A 452-amino-acid polypeptide reads, in one-letter code: MATTSRRFTTGLFASITSVKSHSANRPQSISLIRRNHIDHRLPLIVPSSRRWIIQAARSWDGFDDGAEAEIKKPGAYGYAIGDNEIEGSSSSTVHVIDGEHVKTAEIVIWAAVTAAFGVGNRVMYKLALVPLKEYPFFLAQLSTFGYVAVYYTILYFRYRAGTVTDAMLSVPKSPFLIVGILEALAAAAGMAAAANLSGPSTTVLSQTFLVWQIFFSIIFLGRRYSVNQILGCTLVALGVIVSVASGSGAAHSLNEAGVLWILLMVLSFLLQGAGTVLKEVIFIDSQRRLKGASLDLFIVNSYGSAFQAICIALLLPFLSKLWGIPFNQLGTYLKDGAVCFLNNGTITKGCDGAPFLPLLFVIMNIGYNIALLRLLKISSAVVSCLASTVSVPIAVFLFTMPLPYLGVASSLPKGFMGGTIILVLGMILYSWTPHGANSSHTDSVIPSPPPT.

Residues 1–34 (MATTSRRFTTGLFASITSVKSHSANRPQSISLIR) constitute a chloroplast transit peptide. 10 helical membrane passes run 105-125 (AEIV…RVMY), 137-157 (FFLA…ILYF), 175-195 (PFLI…AAAA), 202-222 (TTVL…IFLG), 230-250 (ILGC…GSGA), 258-278 (GVLW…GTVL), 307-327 (FQAI…GIPF), 353-373 (GAPF…IALL), 389-409 (TVSV…LGVA), and 412-432 (LPKG…LYSW).

This sequence belongs to the CRT-like transporter family.

It is found in the plastid. Its subcellular location is the chloroplast membrane. Involved in thiol transport from the plastid to the cytosol. Transports probably both glutathione (GSH) and its precursor, gamma-glutamylcysteine (gamma-EC). Exhibits some functional redundancy with CLT1 in maintaining the root GSH pool. The protein is Protein CLT3, chloroplastic of Arabidopsis thaliana (Mouse-ear cress).